We begin with the raw amino-acid sequence, 610 residues long: Ectonucleoside triphosphate diphosphohydrolase 7 (610 aa).

Residues 1–28 (MARISFSCLFPASWHCSLPSVTQFSRQR) are Cytoplasmic-facing. A helical membrane pass occupies residues 29 to 49 (VALLIISVAVFILVFAAVADL). At 50–555 (QLWSSRAFRD…VSWFRISFVY (506 aa)) the chain is on the vesicular side. Glu-217 acts as the Proton acceptor in catalysis. 2 N-linked (GlcNAc...) asparagine glycosylation sites follow: Asn-336 and Asn-400. The cysteines at positions 454 and 483 are disulfide-linked. The chain crosses the membrane as a helical span at residues 556–576 (NHYLFFACILVVLLSIVLYIL). The Cytoplasmic portion of the chain corresponds to 577-610 (RLRRIHRRQARASALDLLLMEEGVHTVLEPGIPT).

It belongs to the GDA1/CD39 NTPase family. It depends on Ca(2+) as a cofactor. The cofactor is Mg(2+).

It is found in the cytoplasmic vesicle membrane. It carries out the reaction a ribonucleoside 5'-triphosphate + H2O = a ribonucleoside 5'-diphosphate + phosphate + H(+). It catalyses the reaction UTP + H2O = UDP + phosphate + H(+). The catalysed reaction is GTP + H2O = GDP + phosphate + H(+). The enzyme catalyses CTP + H2O = CDP + phosphate + H(+). Functionally, catalyzes the hydrolysis of nucleoside triphosphates and diphosphates in a calcium- or magnesium-dependent manner. Preferentially hydrolyzes nucleoside 5'-triphosphates, with substrate preference for UTP &gt; GTP &gt; CTP. Hydrolyzes ATP and nucleoside diphosphates only to a minor extent. The polypeptide is Ectonucleoside triphosphate diphosphohydrolase 7 (entpd7) (Xenopus tropicalis (Western clawed frog)).